Here is a 270-residue protein sequence, read N- to C-terminus: Phosphatidylglycerol--prolipoprotein diacylglyceryl transferase (270 aa).

4 helical membrane passes run 19-39, 56-76, 92-112, and 116-136; these read FPVY…LWLA, LVLI…VIFE, QGGL…VLFA, and GLSF…GQAI. Residue R138 participates in a 1,2-diacyl-sn-glycero-3-phospho-(1'-sn-glycerol) binding. Helical transmembrane passes span 178–198, 206–226, and 236–256; these read HPTF…LLAL, GELF…VEGL, and LRIA…FIIV.

This sequence belongs to the Lgt family.

The protein resides in the cell membrane. The enzyme catalyses L-cysteinyl-[prolipoprotein] + a 1,2-diacyl-sn-glycero-3-phospho-(1'-sn-glycerol) = an S-1,2-diacyl-sn-glyceryl-L-cysteinyl-[prolipoprotein] + sn-glycerol 1-phosphate + H(+). Its pathway is protein modification; lipoprotein biosynthesis (diacylglyceryl transfer). Its function is as follows. Catalyzes the transfer of the diacylglyceryl group from phosphatidylglycerol to the sulfhydryl group of the N-terminal cysteine of a prolipoprotein, the first step in the formation of mature lipoproteins. In Bacillus cereus (strain ATCC 14579 / DSM 31 / CCUG 7414 / JCM 2152 / NBRC 15305 / NCIMB 9373 / NCTC 2599 / NRRL B-3711), this protein is Phosphatidylglycerol--prolipoprotein diacylglyceryl transferase.